A 146-amino-acid polypeptide reads, in one-letter code: Hemoglobin subunit beta (146 aa).

N-acetylvaline is present on Val1. A Globin domain is found at 2–146; it reads HLTGEEKSTV…VATALAHKYH (145 aa). At Ser44 the chain carries Phosphoserine. Lys59 is modified (N6-acetyllysine). His63 serves as a coordination point for heme b. Lys82 bears the N6-acetyllysine mark. Position 92 (His92) interacts with heme b. Cys93 carries the S-nitrosocysteine modification. Lys144 is modified (N6-acetyllysine).

Belongs to the globin family. As to quaternary structure, heterotetramer of two alpha chains and two beta chains. Red blood cells.

Involved in oxygen transport from the lung to the various peripheral tissues. The chain is Hemoglobin subunit beta (HBB) from Macrotus californicus (Californian leaf-nosed bat).